A 130-amino-acid chain; its full sequence is Small ribosomal subunit protein uS8 (130 aa).

This sequence belongs to the universal ribosomal protein uS8 family. In terms of assembly, part of the 30S ribosomal subunit.

Functionally, one of the primary rRNA binding proteins, it binds directly to 16S rRNA central domain where it helps coordinate assembly of the platform of the 30S subunit. This Methanoculleus marisnigri (strain ATCC 35101 / DSM 1498 / JR1) protein is Small ribosomal subunit protein uS8.